A 2144-amino-acid polypeptide reads, in one-letter code: Polyketide synthase-like protein Preu9 (2144 aa).

The region spanning 1-250 (MYALHLAVNA…GANAHCIIDH (250 aa)) is the Ketosynthase family 3 (KS3) domain. The tract at residues 276-325 (QNGHLNEFAANGTTNAPSRDHRNGITDGRADGNTNGHPNANGDVGGNPIN) is disordered. Positions 293-305 (SRDHRNGITDGRA) are enriched in basic and acidic residues. The tract at residues 435 to 738 (FVFTGQGAQW…KSPVEQILKS (304 aa)) is malonyl-CoA:ACP transacylase (MAT). An N-terminal hotdog fold region spans residues 827–965 (HDLLGSKVVG…GCVKLIIKSS (139 aa)). Residues 827–1137 (HDLLGSKVVG…ERLRCVSYSR (311 aa)) are dehydratase (DH) domain. The 315-residue stretch at 827–1141 (HDLLGSKVVG…CVSYSRISSD (315 aa)) folds into the PKS/mFAS DH domain. The active-site Proton acceptor; for dehydratase activity is H859. Residues 979–1141 (TLRPVDVRAW…CVSYSRISSD (163 aa)) form a C-terminal hotdog fold region. The Proton donor; for dehydratase activity role is filled by D1050. Residues 1305–1494 (TGIYPQLHRI…GLDVVLDDFP (190 aa)) are methyltransferase (MT) domain. Residues 1731–2042 (GVPNSLCFAS…LANMIGKLVV (312 aa)) form an enoyl reductase (ER) domain region.

Its function is as follows. Polyketide synthase-like protein that lacks important domains such as carrier domain and does probably not function as a polyketide synthase. The polypeptide is Polyketide synthase-like protein Preu9 (Preussia isomera (Coprophilous fungus)).